Consider the following 693-residue polypeptide: Polyribonucleotide nucleotidyltransferase (693 aa).

Mg(2+) contacts are provided by Asp-489 and Asp-495. One can recognise a KH domain in the interval Pro-556–Ile-615. The 69-residue stretch at Gly-625–Arg-693 folds into the S1 motif domain.

Belongs to the polyribonucleotide nucleotidyltransferase family. Component of the RNA degradosome, which is a multiprotein complex involved in RNA processing and mRNA degradation. Mg(2+) is required as a cofactor.

Its subcellular location is the cytoplasm. It carries out the reaction RNA(n+1) + phosphate = RNA(n) + a ribonucleoside 5'-diphosphate. Involved in mRNA degradation. Catalyzes the phosphorolysis of single-stranded polyribonucleotides processively in the 3'- to 5'-direction. This Francisella tularensis subsp. holarctica (strain FTNF002-00 / FTA) protein is Polyribonucleotide nucleotidyltransferase.